The primary structure comprises 511 residues: Apolipoprotein N-acyltransferase (511 aa).

Transmembrane regions (helical) follow at residues 7 to 29, 58 to 78, 90 to 110, 125 to 145, 163 to 183, and 192 to 212; these read PGWP…LAPF, GWWY…VSIH, LLML…AWLW, LAFA…LTGF, VPVG…ALLV, and GASL…GLYL. One can recognise a CN hydrolase domain in the interval 230 to 470; the sequence is IQGNIAQELK…QGILRGEVIP (241 aa). E269 serves as the catalytic Proton acceptor. K330 is a catalytic residue. C382 acts as the Nucleophile in catalysis. Residues 482–502 traverse the membrane as a helical segment; that stretch reads VWPLAGLAGVLLLWALLGRQL.

This sequence belongs to the CN hydrolase family. Apolipoprotein N-acyltransferase subfamily.

The protein localises to the cell inner membrane. The catalysed reaction is N-terminal S-1,2-diacyl-sn-glyceryl-L-cysteinyl-[lipoprotein] + a glycerophospholipid = N-acyl-S-1,2-diacyl-sn-glyceryl-L-cysteinyl-[lipoprotein] + a 2-acyl-sn-glycero-3-phospholipid + H(+). It functions in the pathway protein modification; lipoprotein biosynthesis (N-acyl transfer). In terms of biological role, catalyzes the phospholipid dependent N-acylation of the N-terminal cysteine of apolipoprotein, the last step in lipoprotein maturation. This chain is Apolipoprotein N-acyltransferase, found in Pseudomonas aeruginosa (strain ATCC 15692 / DSM 22644 / CIP 104116 / JCM 14847 / LMG 12228 / 1C / PRS 101 / PAO1).